A 188-amino-acid polypeptide reads, in one-letter code: Acireductone dioxygenase (188 aa).

Fe(2+) contacts are provided by His-97, His-99, Glu-103, and His-141. His-97, His-99, Glu-103, and His-141 together coordinate Ni(2+).

This sequence belongs to the acireductone dioxygenase (ARD) family. Monomer. Requires Fe(2+) as cofactor. The cofactor is Ni(2+).

The enzyme catalyses 1,2-dihydroxy-5-(methylsulfanyl)pent-1-en-3-one + O2 = 3-(methylsulfanyl)propanoate + CO + formate + 2 H(+). It carries out the reaction 1,2-dihydroxy-5-(methylsulfanyl)pent-1-en-3-one + O2 = 4-methylsulfanyl-2-oxobutanoate + formate + 2 H(+). It participates in amino-acid biosynthesis; L-methionine biosynthesis via salvage pathway; L-methionine from S-methyl-5-thio-alpha-D-ribose 1-phosphate: step 5/6. Its function is as follows. Catalyzes 2 different reactions between oxygen and the acireductone 1,2-dihydroxy-3-keto-5-methylthiopentene (DHK-MTPene) depending upon the metal bound in the active site. Fe-containing acireductone dioxygenase (Fe-ARD) produces formate and 2-keto-4-methylthiobutyrate (KMTB), the alpha-ketoacid precursor of methionine in the methionine recycle pathway. Ni-containing acireductone dioxygenase (Ni-ARD) produces methylthiopropionate, carbon monoxide and formate, and does not lie on the methionine recycle pathway. The chain is Acireductone dioxygenase from Xanthomonas oryzae pv. oryzae (strain MAFF 311018).